A 259-amino-acid chain; its full sequence is Type III pantothenate kinase (259 aa).

6–13 (DVGNTNIV) is a binding site for ATP. Substrate is bound by residues Y100 and 107 to 110 (GADR). The active-site Proton acceptor is D109. K(+) is bound at residue D129. T132 provides a ligand contact to ATP. T184 is a binding site for substrate.

This sequence belongs to the type III pantothenate kinase family. In terms of assembly, homodimer. Requires NH4(+) as cofactor. The cofactor is K(+).

It is found in the cytoplasm. The catalysed reaction is (R)-pantothenate + ATP = (R)-4'-phosphopantothenate + ADP + H(+). It participates in cofactor biosynthesis; coenzyme A biosynthesis; CoA from (R)-pantothenate: step 1/5. Its function is as follows. Catalyzes the phosphorylation of pantothenate (Pan), the first step in CoA biosynthesis. In Clostridium kluyveri (strain NBRC 12016), this protein is Type III pantothenate kinase.